The primary structure comprises 431 residues: Reticulon-like protein B17 (431 aa).

2 disordered regions span residues 1–110 and 126–152; these read MEST…SEAV and PPRKRKTNGRPKKDKQSSAPPLCSSSD. The span at 12-26 shows a compositional bias: polar residues; sequence TKSASRLQDSSNPPN. Over residues 126 to 138 the composition is skewed to basic residues; that stretch reads PPRKRKTNGRPKK. Polar residues predominate over residues 142–152; it reads SSAPPLCSSSD. Residues 168–355 enclose the Reticulon domain; sequence ISDLVMWRDV…VTAFWNLTSI (188 aa). A run of 4 helical transmembrane segments spans residues 177–197, 202–222, 286–306, and 349–369; these read VAKSTLWFGFGCLSFLSSCFA, FSVFSAVSNLGLVLLCGSFLS, YGHLITLWRLSAFGFFLSFTI, and FWNLTSIRTRIFAVFIILVIF. Residues 382-415 show a composition bias toward acidic residues; it reads EVEPVENEQEEETLPQEEETVPQEEETVPQEEEQ. Residues 382–422 are disordered; sequence EVEPVENEQEEETLPQEEETVPQEEETVPQEEEQTQPSEER.

It is found in the endoplasmic reticulum membrane. This is Reticulon-like protein B17 (RTNLB17) from Arabidopsis thaliana (Mouse-ear cress).